The chain runs to 188 residues: dCTP deaminase (188 aa).

DCTP contacts are provided by residues 111-116 (KSTYAR), 135-137 (TLE), Q156, Y170, and Q180. E137 acts as the Proton donor/acceptor in catalysis.

The protein belongs to the dCTP deaminase family. Homotrimer.

The catalysed reaction is dCTP + H2O + H(+) = dUTP + NH4(+). It participates in pyrimidine metabolism; dUMP biosynthesis; dUMP from dCTP (dUTP route): step 1/2. Catalyzes the deamination of dCTP to dUTP. This chain is dCTP deaminase, found in Cupriavidus taiwanensis (strain DSM 17343 / BCRC 17206 / CCUG 44338 / CIP 107171 / LMG 19424 / R1) (Ralstonia taiwanensis (strain LMG 19424)).